We begin with the raw amino-acid sequence, 622 residues long: Probable potassium transport system protein Kup (622 aa).

The next 12 helical transmembrane spans lie at 7 to 27, 44 to 64, 95 to 115, 133 to 153, 165 to 185, 199 to 219, 243 to 263, 290 to 310, 338 to 358, 370 to 390, 395 to 415, and 422 to 442; these read LAIGAIGIVFGDIGTSPLYAF, VLGVVSLIFWSMTLIVAIQYV, GWLVVLLGVFATSLFYGDSMI, PELQGFVIPIALVLLVGLFVL, FAPVMIVYFTVIATLGLISIV, AVLFFINDGFLAFLALGSVVL, WFGFVMPCLLLNYFGQGAMIV, LVILATFATFIASQAVISGAF, IYIPVINWALMVAVILLVLTF, IAVTGAVTIDTLLMAVLLVGV, WYYAAPVVIVFLIIDGAYFAA, and DGGWFPLVVGLIVFTLLTTWA.

The protein belongs to the HAK/KUP transporter (TC 2.A.72) family.

It is found in the cell inner membrane. The enzyme catalyses K(+)(in) + H(+)(in) = K(+)(out) + H(+)(out). In terms of biological role, transport of potassium into the cell. Likely operates as a K(+):H(+) symporter. In Erythrobacter litoralis (strain HTCC2594), this protein is Probable potassium transport system protein Kup.